The following is a 402-amino-acid chain: 2,3-bisphosphoglycerate-independent phosphoglycerate mutase (402 aa).

Positions S155–P174 are disordered. Basic and acidic residues predominate over residues S160–P174.

Belongs to the BPG-independent phosphoglycerate mutase family. A-PGAM subfamily.

The enzyme catalyses (2R)-2-phosphoglycerate = (2R)-3-phosphoglycerate. Its pathway is carbohydrate degradation; glycolysis; pyruvate from D-glyceraldehyde 3-phosphate: step 3/5. Its function is as follows. Catalyzes the interconversion of 2-phosphoglycerate and 3-phosphoglycerate. The sequence is that of 2,3-bisphosphoglycerate-independent phosphoglycerate mutase from Picrophilus torridus (strain ATCC 700027 / DSM 9790 / JCM 10055 / NBRC 100828 / KAW 2/3).